A 203-amino-acid chain; its full sequence is Small ribosomal subunit protein uS3 (203 aa).

The protein belongs to the universal ribosomal protein uS3 family. In terms of assembly, part of the 30S ribosomal subunit. Forms a tight complex with proteins S10 and S14.

Functionally, binds the lower part of the 30S subunit head. Binds mRNA in the 70S ribosome, positioning it for translation. The polypeptide is Small ribosomal subunit protein uS3 (Carsonella ruddii (strain PV)).